The chain runs to 391 residues: Formate-dependent phosphoribosylglycinamide formyltransferase (391 aa).

N(1)-(5-phospho-beta-D-ribosyl)glycinamide is bound by residues 20-21 (EL) and E80. ATP-binding positions include R112, K153, 158-163 (SSGKGQ), 193-196 (EGFI), and E201. The ATP-grasp domain maps to 117–306 (RLAAETLGLP…EFALHVRAIQ (190 aa)). 2 residues coordinate Mg(2+): E265 and E277. N(1)-(5-phospho-beta-D-ribosyl)glycinamide is bound by residues D284, K354, and 361 to 362 (RR).

Belongs to the PurK/PurT family. Homodimer.

It carries out the reaction N(1)-(5-phospho-beta-D-ribosyl)glycinamide + formate + ATP = N(2)-formyl-N(1)-(5-phospho-beta-D-ribosyl)glycinamide + ADP + phosphate + H(+). It participates in purine metabolism; IMP biosynthesis via de novo pathway; N(2)-formyl-N(1)-(5-phospho-D-ribosyl)glycinamide from N(1)-(5-phospho-D-ribosyl)glycinamide (formate route): step 1/1. Its function is as follows. Involved in the de novo purine biosynthesis. Catalyzes the transfer of formate to 5-phospho-ribosyl-glycinamide (GAR), producing 5-phospho-ribosyl-N-formylglycinamide (FGAR). Formate is provided by PurU via hydrolysis of 10-formyl-tetrahydrofolate. This Shewanella baltica (strain OS185) protein is Formate-dependent phosphoribosylglycinamide formyltransferase.